The chain runs to 784 residues: Phosphate transporter PHO1 homolog 1 (784 aa).

The Cytoplasmic segment spans residues 1-387 (MVKFTKQFEG…HHRKESHSVT (387 aa)). Residues 2 to 335 (VKFTKQFEGQ…GKQILPIYLK (334 aa)) enclose the SPX domain. Residues 388-408 (FFIGLFTGCFVALLAGYIIVA) form a helical membrane-spanning segment. Topologically, residues 409 to 429 (HLTGMYRQHSANTFYMETAYP) are extracellular. Residues 430–450 (VLSMFGLLFLHLFLYGCNIFM) traverse the membrane as a helical segment. Residues 451–474 (WRKARINYSFIFELGSKNELKYRD) are Cytoplasmic-facing. A helical membrane pass occupies residues 475–495 (VFLICTASMSAIAGVMFVHLS). Topologically, residues 496–507 (LLEKGYSFRQVQ) are extracellular. The chain crosses the membrane as a helical span at residues 508–528 (VIPGLLLLGFLLILICPLNIF). Topologically, residues 529-654 (YKSSRYRLIS…TKVAYEKERS (126 aa)) are cytoplasmic. The region spanning 593-784 (MRVKYYRDLA…LPFREVDEED (192 aa)) is the EXS domain. Residues 655–675 (LGWLCLVVAMSSVATIYQLYW) form a helical membrane-spanning segment. Residues 676 to 703 (DFVKDWGLLQHNSNNPWLRNQLMLRQKS) lie on the Extracellular side of the membrane. A helical transmembrane segment spans residues 704–724 (IYYFSMVLNLVLRLAWLQTVL). The Cytoplasmic segment spans residues 725–784 (HSSFEHVDYRVTGLFLAALEVIRRGQWNFYRLENEHLNNAGKFRAVKTVPLPFREVDEED).

Belongs to the SYG1 (TC 2.A.94) family. As to expression, expressed in vascular cylinder of roots, leaves, stems, petals, sepals and filaments. Expressed in receptacle, stigma apex and anther connective tissue.

It localises to the cell membrane. In terms of biological role, contributes to the loading of inorganic phosphate (Pi) into the root xylem vessels. This Arabidopsis thaliana (Mouse-ear cress) protein is Phosphate transporter PHO1 homolog 1 (PHO1-H1).